The chain runs to 580 residues: Putative monoterpene synthase 8 (580 aa).

The transit peptide at 1–44 (MACTSNLSSLSKSWAVLDVPRGAPKATGLWLKRQFIFKTSRICM) directs the protein to the chloroplast. Mg(2+) contacts are provided by D333, D337, D478, T482, and E486. Residues 333–337 (DDIFD) carry the DDXXD motif motif.

The protein belongs to the terpene synthase family. Tpsg subfamily. In terms of assembly, monomer. Mg(2+) is required as a cofactor. The cofactor is Mn(2+). In terms of tissue distribution, confined to flowers.

The protein resides in the plastid. The protein localises to the chloroplast. Its pathway is secondary metabolite biosynthesis; terpenoid biosynthesis. In terms of biological role, monoterpene synthase (mono-TPS) involved in the biosynthesis of monoterpenes natural products, constituent of coffee beverage aroma. The protein is Putative monoterpene synthase 8 of Coffea arabica (Arabian coffee).